Here is a 265-residue protein sequence, read N- to C-terminus: Hydroxyethylthiazole kinase (265 aa).

M43 lines the substrate pocket. ATP-binding residues include K118 and T165. G192 contributes to the substrate binding site.

This sequence belongs to the Thz kinase family. Mg(2+) is required as a cofactor.

It carries out the reaction 5-(2-hydroxyethyl)-4-methylthiazole + ATP = 4-methyl-5-(2-phosphooxyethyl)-thiazole + ADP + H(+). Its pathway is cofactor biosynthesis; thiamine diphosphate biosynthesis; 4-methyl-5-(2-phosphoethyl)-thiazole from 5-(2-hydroxyethyl)-4-methylthiazole: step 1/1. Functionally, catalyzes the phosphorylation of the hydroxyl group of 4-methyl-5-beta-hydroxyethylthiazole (THZ). The polypeptide is Hydroxyethylthiazole kinase (Pyrococcus horikoshii (strain ATCC 700860 / DSM 12428 / JCM 9974 / NBRC 100139 / OT-3)).